The chain runs to 402 residues: Diaminopimelate decarboxylase (402 aa).

The residue at position 61 (Lys-61) is an N6-(pyridoxal phosphate)lysine. Residues Gly-233 and 269–272 each bind pyridoxal 5'-phosphate; that span reads EPGR. 5 residues coordinate substrate: Arg-272, Arg-304, Tyr-308, Glu-334, and Tyr-360. Tyr-360 provides a ligand contact to pyridoxal 5'-phosphate.

The protein belongs to the Orn/Lys/Arg decarboxylase class-II family. LysA subfamily. Homodimer. The cofactor is pyridoxal 5'-phosphate.

The catalysed reaction is meso-2,6-diaminopimelate + H(+) = L-lysine + CO2. It functions in the pathway amino-acid biosynthesis; L-lysine biosynthesis via DAP pathway; L-lysine from DL-2,6-diaminopimelate: step 1/1. Functionally, specifically catalyzes the decarboxylation of meso-diaminopimelate (meso-DAP) to L-lysine. This chain is Diaminopimelate decarboxylase, found in Thermoplasma acidophilum (strain ATCC 25905 / DSM 1728 / JCM 9062 / NBRC 15155 / AMRC-C165).